A 293-amino-acid polypeptide reads, in one-letter code: MPHHDQLHRYLFDNLAVRGELVNASATYARILENHDYPAAVRALLGELLVATTLLTATLKFDGDITVQLQGDGPLKLAVINGNHRQEMRGVARLQGDIADGSSLKHMLGNGIMVITITPKEGERYQGVVALEGDTLSNCLEAYFMQSEQLPTRLFMFTGEQDGQPAAAGMLLQILPTQPNNVDDLTHLSHLTTTVTPQELFTLPANEVLYRLYNQEQVTLFEPQPIAFLCGCSRGRSASALMSLPPQQLEELLAERGSIDIHCDYCGSHYLFDRVDIDALRAGAQPDEAGQLH.

Cystine bridges form between Cys-230-Cys-232 and Cys-263-Cys-266.

This sequence belongs to the HSP33 family. Under oxidizing conditions two disulfide bonds are formed involving the reactive cysteines. Under reducing conditions zinc is bound to the reactive cysteines and the protein is inactive.

Its subcellular location is the cytoplasm. In terms of biological role, redox regulated molecular chaperone. Protects both thermally unfolding and oxidatively damaged proteins from irreversible aggregation. Plays an important role in the bacterial defense system toward oxidative stress. This Edwardsiella ictaluri (strain 93-146) protein is 33 kDa chaperonin.